The following is a 338-amino-acid chain: MATRARGFSLLRGRLGRGPVRAPGVAERAWRGFGSSGRRHEAVIISGTNMAKQIQKEIQQGVESWIALGNRRPHLSIILVGDNPASHTYVRNKIKAASAVGICSELIIKPKNVSQEELLDITDQLNMDPRVSGILVQLPLPDHVDERTICNGIAPEKDVDGFHIINIGRLCLDQHSLIPATASAVWEIIKRAGIETFGKNVVVAGRSKNVGMPIAMLLHTDGEHERPGGDATVTIAHRYTPREQLKAHTQLADIIIVAAGIPRLITADMVREGAAVIDVGINYIQDPVTGKTKLVGDVDFEAVKKKASFITPVPGGVGPMTVAMLLKNTLLAAKNIAY.

Residues 89–93 and 136–138 each bind substrate; these read YVRNK and VQL. Residues 205–207 and Arg238 contribute to the NAD(+) site; that span reads GRS. 314 to 318 contacts substrate; it reads PGGVG.

Belongs to the tetrahydrofolate dehydrogenase/cyclohydrolase family. The cofactor is Mg(2+). As to expression, widely expressed.

The protein resides in the mitochondrion inner membrane. The catalysed reaction is (6R)-5,10-methylene-5,6,7,8-tetrahydrofolate + NAD(+) = (6R)-5,10-methenyltetrahydrofolate + NADH. It catalyses the reaction (6R)-5,10-methenyltetrahydrofolate + H2O = (6R)-10-formyltetrahydrofolate + H(+). The enzyme catalyses (6R)-5,10-methylene-5,6,7,8-tetrahydrofolate + NADP(+) = (6R)-5,10-methenyltetrahydrofolate + NADPH. Its pathway is one-carbon metabolism; tetrahydrofolate interconversion. In terms of biological role, bifunctional mitochondrial folate-interconverting enzyme that has both NAD/NADP-dependent methylenetetrahydrofolate dehydrogenase and methenyltetrahydrofolate cyclohydrolase activities. This is Bifunctional methylenetetrahydrofolate dehydrogenase/cyclohydrolase 2, mitochondrial from Mus musculus (Mouse).